Reading from the N-terminus, the 560-residue chain is MKESYDYIIIGGGSAGSVLGGRLSEDVSNNVLVLEAGRSDYPWDLLIQMPAALMYPAGNKLYDWIYETTPEPHMDGRKVGHARGKVLGGSSSINGMIYQRGNPMDYEKWAKPEGMESWDYAHCLPYFKRLETTFGSKKGDPYRGHHGPIKLRRGPADNPLFQAFFDAGVEAGYNKTPDVNGFRQEGFGPFDSQVHNGRRVSASRAYLHPAMKRKNLEVQTRAFVTKLNFEGNKVTGVTFKKNGKEHTESAKEVILSGGAINSPQLLQLSGIGDSEHLRSLGIEPRIHLPGVGENFEDHLEVYVQHACKQPVSMQPSLNKLKMPFIGLQWILGRKGAAASNHFEGGGFVRSNDDVDYPNLMFHFLPIAVRYDGTKAPAAHGYQVHVGPMYSNSRGHLKIKSKDPFEKPEFVFNYLSTEEDKREWVEAIKVARNILKQKALDPFNGGEISPGPEVQTDEEIIEWVKRDGETALHPSCSCRMGPASDEMSVVDPETFKVHGMENLRVVDASVMPRTTNGNIHSPVLMMAERASDIIRGKKPLDPQYIDFYRHGVHDKDAGTVK.

FAD is bound at residue 6–35 (DYIIIGGGSAGSVLGGRLSEDVSNNVLVLE). The active-site Proton acceptor is the His472.

It belongs to the GMC oxidoreductase family. It depends on FAD as a cofactor.

It catalyses the reaction choline + A = betaine aldehyde + AH2. The enzyme catalyses betaine aldehyde + NAD(+) + H2O = glycine betaine + NADH + 2 H(+). It functions in the pathway amine and polyamine biosynthesis; betaine biosynthesis via choline pathway; betaine aldehyde from choline (cytochrome c reductase route): step 1/1. In terms of biological role, involved in the biosynthesis of the osmoprotectant glycine betaine. Catalyzes the oxidation of choline to betaine aldehyde and betaine aldehyde to glycine betaine at the same rate. This is Oxygen-dependent choline dehydrogenase from Staphylococcus xylosus.